We begin with the raw amino-acid sequence, 132 residues long: Large ribosomal subunit protein bL17 (132 aa).

It belongs to the bacterial ribosomal protein bL17 family. In terms of assembly, part of the 50S ribosomal subunit. Contacts protein L32.

This Anaplasma phagocytophilum (strain HZ) protein is Large ribosomal subunit protein bL17.